The sequence spans 53 residues: Rubredoxin (53 aa).

One can recognise a Rubredoxin-like domain in the interval 1 to 52 (MAKWRCKICGYIYDEDEGDPDNGISPGTKFEDLPDDWVCPLCGAPKSEFERI). Residues Cys-6, Cys-9, Cys-39, and Cys-42 each contribute to the Fe cation site.

The protein belongs to the rubredoxin family. The cofactor is Fe(3+).

Rubredoxin is a small nonheme, iron protein lacking acid-labile sulfide. Its single Fe, chelated to 4 Cys, functions as an electron acceptor and may also stabilize the conformation of the molecule. The sequence is that of Rubredoxin (rub) from Pyrococcus abyssi (strain GE5 / Orsay).